A 282-amino-acid polypeptide reads, in one-letter code: Biotin synthase (282 aa).

In terms of domain architecture, Radical SAM core spans 1 to 230 (MSDNKIYLCA…NQMLMIAGGR (230 aa)). Residues C19, C23, and C26 each coordinate [4Fe-4S] cluster. [2Fe-2S] cluster-binding residues include C63, C98, and C156.

This sequence belongs to the radical SAM superfamily. Biotin synthase family. Homodimer. Requires [4Fe-4S] cluster as cofactor. [2Fe-2S] cluster serves as cofactor.

It carries out the reaction (4R,5S)-dethiobiotin + (sulfur carrier)-SH + 2 reduced [2Fe-2S]-[ferredoxin] + 2 S-adenosyl-L-methionine = (sulfur carrier)-H + biotin + 2 5'-deoxyadenosine + 2 L-methionine + 2 oxidized [2Fe-2S]-[ferredoxin]. Its pathway is cofactor biosynthesis; biotin biosynthesis; biotin from 7,8-diaminononanoate: step 2/2. Functionally, catalyzes the conversion of dethiobiotin (DTB) to biotin by the insertion of a sulfur atom into dethiobiotin via a radical-based mechanism. The sequence is that of Biotin synthase from Aliarcobacter butzleri (strain RM4018) (Arcobacter butzleri).